Here is a 216-residue protein sequence, read N- to C-terminus: 3-isopropylmalate dehydratase small subunit (216 aa).

This sequence belongs to the LeuD family. LeuD type 1 subfamily. In terms of assembly, heterodimer of LeuC and LeuD.

The catalysed reaction is (2R,3S)-3-isopropylmalate = (2S)-2-isopropylmalate. It functions in the pathway amino-acid biosynthesis; L-leucine biosynthesis; L-leucine from 3-methyl-2-oxobutanoate: step 2/4. Its function is as follows. Catalyzes the isomerization between 2-isopropylmalate and 3-isopropylmalate, via the formation of 2-isopropylmaleate. This is 3-isopropylmalate dehydratase small subunit from Burkholderia mallei (strain NCTC 10247).